A 25-amino-acid chain; its full sequence is Dermaseptin-DI5 (25 aa).

It belongs to the frog skin active peptide (FSAP) family. Dermaseptin subfamily. Expressed by the skin glands.

It localises to the secreted. Functionally, antibacterial peptide with activity against Gram-positive bacteria S.aureus and E.faecalis, and Gram-negative bacteria P.aeruginosa and E.coli. The sequence is that of Dermaseptin-DI5 from Phyllomedusa distincta (Monkey frog).